The chain runs to 155 residues: Large ribosomal subunit protein uL30 (155 aa).

Belongs to the universal ribosomal protein uL30 family. In terms of assembly, part of the 50S ribosomal subunit.

This chain is Large ribosomal subunit protein uL30, found in Pyrococcus furiosus (strain ATCC 43587 / DSM 3638 / JCM 8422 / Vc1).